The sequence spans 287 residues: Elongation factor Ts (287 aa).

An involved in Mg(2+) ion dislocation from EF-Tu region spans residues 77–80; that stretch reads TDFV.

The protein belongs to the EF-Ts family.

The protein localises to the cytoplasm. Associates with the EF-Tu.GDP complex and induces the exchange of GDP to GTP. It remains bound to the aminoacyl-tRNA.EF-Tu.GTP complex up to the GTP hydrolysis stage on the ribosome. The chain is Elongation factor Ts from Wolbachia sp. subsp. Brugia malayi (strain TRS).